The primary structure comprises 383 residues: tRNA-specific 2-thiouridylase MnmA (383 aa).

Residues 9–16 (GMSGGVDS) and M35 each bind ATP. The segment at 95 to 97 (NPD) is interaction with target base in tRNA. The active-site Nucleophile is the C100. Residues C100 and C196 are joined by a disulfide bond. Residue G124 participates in ATP binding. Positions 146–148 (KDQ) are interaction with tRNA. C196 (cysteine persulfide intermediate) is an active-site residue. The interval 308-309 (RY) is interaction with tRNA.

The protein belongs to the MnmA/TRMU family.

The protein localises to the cytoplasm. It carries out the reaction S-sulfanyl-L-cysteinyl-[protein] + uridine(34) in tRNA + AH2 + ATP = 2-thiouridine(34) in tRNA + L-cysteinyl-[protein] + A + AMP + diphosphate + H(+). Its function is as follows. Catalyzes the 2-thiolation of uridine at the wobble position (U34) of tRNA, leading to the formation of s(2)U34. The sequence is that of tRNA-specific 2-thiouridylase MnmA from Burkholderia mallei (strain NCTC 10247).